Reading from the N-terminus, the 434-residue chain is 5-methylthioadenosine/S-adenosylhomocysteine deaminase (434 aa).

Zn(2+) is bound by residues histidine 66 and histidine 68. Substrate-binding residues include glutamate 95, arginine 148, and histidine 188. Histidine 215 is a Zn(2+) binding site. Substrate-binding residues include glutamate 218 and aspartate 304. Residue aspartate 304 participates in Zn(2+) binding.

This sequence belongs to the metallo-dependent hydrolases superfamily. MTA/SAH deaminase family. Zn(2+) serves as cofactor.

The catalysed reaction is S-adenosyl-L-homocysteine + H2O + H(+) = S-inosyl-L-homocysteine + NH4(+). The enzyme catalyses S-methyl-5'-thioadenosine + H2O + H(+) = S-methyl-5'-thioinosine + NH4(+). Its function is as follows. Catalyzes the deamination of 5-methylthioadenosine and S-adenosyl-L-homocysteine into 5-methylthioinosine and S-inosyl-L-homocysteine, respectively. Is also able to deaminate adenosine. The protein is 5-methylthioadenosine/S-adenosylhomocysteine deaminase of Shouchella clausii (strain KSM-K16) (Alkalihalobacillus clausii).